The primary structure comprises 420 residues: Mitogen-activated protein kinase HOG2 (420 aa).

Residues 29–37 (VGMGAFGLV) and K52 contribute to the ATP site. Catalysis depends on D144, which acts as the Proton acceptor. T174 is modified (phosphothreonine). A TXY motif is present at residues 174–176 (TGY). At Y176 the chain carries Phosphotyrosine. Positions 372–394 (AQHHHQTQQQSSGKHTNPTTSSS) are disordered.

It belongs to the protein kinase superfamily. Ser/Thr protein kinase family. MAP kinase subfamily. HOG1 sub-subfamily. Requires Mg(2+) as cofactor. In terms of processing, dually phosphorylated on Thr-174 and Tyr-176, which activates the enzyme.

It is found in the cytoplasm. The protein resides in the nucleus. The enzyme catalyses L-seryl-[protein] + ATP = O-phospho-L-seryl-[protein] + ADP + H(+). It carries out the reaction L-threonyl-[protein] + ATP = O-phospho-L-threonyl-[protein] + ADP + H(+). Activated by tyrosine and threonine phosphorylation. In terms of biological role, mitogen-activated protein kinase involved in a signal transduction pathway that is activated by changes in the osmolarity of the extracellular environment. Controls osmotic regulation of transcription of target genes. This chain is Mitogen-activated protein kinase HOG2 (HOG2), found in Zygosaccharomyces rouxii.